We begin with the raw amino-acid sequence, 198 residues long: Ribonuclease HII (198 aa).

One can recognise an RNase H type-2 domain in the interval 11–198 (NLIAGVDEVG…GPVKRVLGLV (188 aa)). Residues Asp17, Glu18, and Asp109 each coordinate a divalent metal cation.

This sequence belongs to the RNase HII family. Mn(2+) is required as a cofactor. Mg(2+) serves as cofactor.

It localises to the cytoplasm. The enzyme catalyses Endonucleolytic cleavage to 5'-phosphomonoester.. In terms of biological role, endonuclease that specifically degrades the RNA of RNA-DNA hybrids. In Yersinia pseudotuberculosis serotype O:3 (strain YPIII), this protein is Ribonuclease HII.